The following is a 61-amino-acid chain: MAKKSQIVKWLKPKKYKVREYNRCRICGRPRGYIRKFGLCRLCFRELALKGEIPGVRKASW.

Zn(2+) is bound by residues cysteine 24, cysteine 27, cysteine 40, and cysteine 43.

It belongs to the universal ribosomal protein uS14 family. Zinc-binding uS14 subfamily. As to quaternary structure, part of the 30S ribosomal subunit. Contacts proteins S3 and S10. Zn(2+) serves as cofactor.

Binds 16S rRNA, required for the assembly of 30S particles and may also be responsible for determining the conformation of the 16S rRNA at the A site. This Dictyoglomus turgidum (strain DSM 6724 / Z-1310) protein is Small ribosomal subunit protein uS14.